Consider the following 116-residue polypeptide: Iron-sulfur cluster assembly protein CyaY (116 aa).

This sequence belongs to the frataxin family.

Involved in iron-sulfur (Fe-S) cluster assembly. May act as a regulator of Fe-S biogenesis. The sequence is that of Iron-sulfur cluster assembly protein CyaY from Polaromonas sp. (strain JS666 / ATCC BAA-500).